The sequence spans 356 residues: Holliday junction branch migration complex subunit RuvB (356 aa).

Positions 4–192 (DDTTDATADE…FGFTAHMEFY (189 aa)) are large ATPase domain (RuvB-L). ATP-binding positions include L31, R32, G73, K76, T77, T78, 139–141 (EDF), R182, Y192, and R229. T77 lines the Mg(2+) pocket. The interval 193–263 (EPHELERVIH…IAAAALKVYE (71 aa)) is small ATPAse domain (RuvB-S). A head domain (RuvB-H) region spans residues 266–356 (ARGLDRLDRG…GNGQGDLFGA (91 aa)). Positions 302, 321, and 326 each coordinate DNA.

Belongs to the RuvB family. Homohexamer. Forms an RuvA(8)-RuvB(12)-Holliday junction (HJ) complex. HJ DNA is sandwiched between 2 RuvA tetramers; dsDNA enters through RuvA and exits via RuvB. An RuvB hexamer assembles on each DNA strand where it exits the tetramer. Each RuvB hexamer is contacted by two RuvA subunits (via domain III) on 2 adjacent RuvB subunits; this complex drives branch migration. In the full resolvosome a probable DNA-RuvA(4)-RuvB(12)-RuvC(2) complex forms which resolves the HJ.

It localises to the cytoplasm. The enzyme catalyses ATP + H2O = ADP + phosphate + H(+). Its function is as follows. The RuvA-RuvB-RuvC complex processes Holliday junction (HJ) DNA during genetic recombination and DNA repair, while the RuvA-RuvB complex plays an important role in the rescue of blocked DNA replication forks via replication fork reversal (RFR). RuvA specifically binds to HJ cruciform DNA, conferring on it an open structure. The RuvB hexamer acts as an ATP-dependent pump, pulling dsDNA into and through the RuvAB complex. RuvB forms 2 homohexamers on either side of HJ DNA bound by 1 or 2 RuvA tetramers; 4 subunits per hexamer contact DNA at a time. Coordinated motions by a converter formed by DNA-disengaged RuvB subunits stimulates ATP hydrolysis and nucleotide exchange. Immobilization of the converter enables RuvB to convert the ATP-contained energy into a lever motion, pulling 2 nucleotides of DNA out of the RuvA tetramer per ATP hydrolyzed, thus driving DNA branch migration. The RuvB motors rotate together with the DNA substrate, which together with the progressing nucleotide cycle form the mechanistic basis for DNA recombination by continuous HJ branch migration. Branch migration allows RuvC to scan DNA until it finds its consensus sequence, where it cleaves and resolves cruciform DNA. The protein is Holliday junction branch migration complex subunit RuvB of Streptomyces avermitilis (strain ATCC 31267 / DSM 46492 / JCM 5070 / NBRC 14893 / NCIMB 12804 / NRRL 8165 / MA-4680).